The following is a 252-amino-acid chain: Protein BTG3 (252 aa).

Residues Val-138–Ser-162 are disordered.

It belongs to the BTG family. As to expression, ubiquitous. High expression in the ventricular zone of the developing central nervous system. High in ovary, testis, prostate, thymus and lung.

Functionally, overexpression impairs serum-induced cell cycle progression from the G0/G1 to S phase. This Homo sapiens (Human) protein is Protein BTG3 (BTG3).